A 100-amino-acid chain; its full sequence is MTPWFLYLIRTADNKLYTGITTDVERRYQQHQSGKGAKALRGKGELTLAFSAPVGDRSLALRAEYRVKQLTKRQKERLVAEGAGFAELLSSLQTPKVKSD.

Residues 2 to 77 (TPWFLYLIRT…KQLTKRQKER (76 aa)) enclose the GIY-YIG domain.

This sequence belongs to the UPF0213 family.

The polypeptide is UPF0213 protein YhbQ (Escherichia coli O17:K52:H18 (strain UMN026 / ExPEC)).